A 193-amino-acid chain; its full sequence is Pilin-like protein PilA2 (193 aa).

Residues 1 to 4 constitute a propeptide, leader sequence; that stretch reads MRKG. Position 5 is an N-methylleucine (leucine 5). The helical transmembrane segment at 5–25 threads the bilayer; it reads LTLVEVLVTLVIMGIAFAALL.

Its subcellular location is the cell inner membrane. The protein localises to the cell outer membrane. The protein resides in the periplasm. Plays an essential role in natural DNA transformation but is not required for pilus biogenesis. This chain is Pilin-like protein PilA2 (pilA2), found in Thermus thermophilus (strain ATCC BAA-163 / DSM 7039 / HB27).